The chain runs to 414 residues: Esterase FrsA (414 aa).

It belongs to the FrsA family.

The catalysed reaction is a carboxylic ester + H2O = an alcohol + a carboxylate + H(+). Catalyzes the hydrolysis of esters. The sequence is that of Esterase FrsA from Escherichia coli O127:H6 (strain E2348/69 / EPEC).